Consider the following 107-residue polypeptide: Antimicrobial peptide damicornin (107 aa).

The N-terminal stretch at 1–22 (MKVLVILFGAMLVLMEFQKASA) is a signal peptide. Positions 23–67 (ATLLEDFDDDDDLLDDGGDFDLEANSDASSGNGNDSNDAVPEKRR) are excised as a propeptide. Positions 37-46 (DDGGDFDLEA) are enriched in acidic residues. The segment at 37 to 62 (DDGGDFDLEANSDASSGNGNDSNDAV) is disordered. Residues 47–61 (NSDASSGNGNDSNDA) are compositionally biased toward low complexity. Cystine bridges form between cysteine 69–cysteine 105, cysteine 78–cysteine 99, and cysteine 85–cysteine 103. Arginine 106 carries the arginine amide modification.

It belongs to the coral AMP family. In terms of tissue distribution, is specifically expressed in the granular cells of the ectoderm.

It is found in the cytoplasm. Its subcellular location is the stress granule. It localises to the secreted. Cationic peptide with probable antimicrobial activity against coral pathogens. Shows in vitro activity against Gram-positive bacteria and the filamentous fungus F.oxysporum (MIC=1.25 uM). Gram-positive bacteria tested are B.megaterium (MIC=20 uM), S.aureus (MIC=5 uM), M. luteus (MIC=1.25 uM), B.stationis (MIC=10 uM), M.maritypicum (MIC=20 uM). Has no or little effect against Gram-negative bacteria (the coral pathogen V.coralliilyticus (MIC&gt;20 uM), V.aesturianus (MIC&gt;20 uM), V.shiloi (MIC&gt;20 uM), and E.coli (MIC=10 uM)). Has no hemolytic activity against sheep erythrocytes. This is Antimicrobial peptide damicornin from Pocillopora damicornis (Cauliflower coral).